We begin with the raw amino-acid sequence, 473 residues long: Photosystem II CP43 reaction center protein (473 aa).

Residues 1–14 (MKTLYSLRRFYHVE) constitute a propeptide that is removed on maturation. T15 bears the N-acetylthreonine mark. T15 is subject to Phosphothreonine. The next 5 helical transmembrane spans lie at 69–93 (LFEV…PHLA), 134–155 (LLGP…KDRN), 178–200 (KALY…RKIT), 255–275 (KPFA…LSYS), and 291–312 (WFNN…ASQA). Position 367 (E367) interacts with [CaMn4O5] cluster. A helical transmembrane segment spans residues 447–471 (RARAAAAGFEKGIDRDFEPVLSMTP).

This sequence belongs to the PsbB/PsbC family. PsbC subfamily. In terms of assembly, PSII is composed of 1 copy each of membrane proteins PsbA, PsbB, PsbC, PsbD, PsbE, PsbF, PsbH, PsbI, PsbJ, PsbK, PsbL, PsbM, PsbT, PsbX, PsbY, PsbZ, Psb30/Ycf12, at least 3 peripheral proteins of the oxygen-evolving complex and a large number of cofactors. It forms dimeric complexes. Binds multiple chlorophylls and provides some of the ligands for the Ca-4Mn-5O cluster of the oxygen-evolving complex. It may also provide a ligand for a Cl- that is required for oxygen evolution. PSII binds additional chlorophylls, carotenoids and specific lipids. is required as a cofactor.

It is found in the plastid. It localises to the chloroplast thylakoid membrane. In terms of biological role, one of the components of the core complex of photosystem II (PSII). It binds chlorophyll and helps catalyze the primary light-induced photochemical processes of PSII. PSII is a light-driven water:plastoquinone oxidoreductase, using light energy to abstract electrons from H(2)O, generating O(2) and a proton gradient subsequently used for ATP formation. The chain is Photosystem II CP43 reaction center protein from Nicotiana tabacum (Common tobacco).